The primary structure comprises 412 residues: 43 kDa receptor-associated protein of the synapse (412 aa).

Gly2 carries the N-myristoyl glycine lipid modification. 7 TPR repeats span residues 6-39, 83-116, 123-156, 163-196, 206-239, 246-279, and 286-319; these read TKQQIEKGLQLYQANETGKALEIWQQVVERSTEL, TEAYLNLARGHEKLCEFSEAVAYCRTCLGAEGGP, GQVCLSMGNAFLGLSAFQKALECFEKALRYAHGN, CRVCCSLGAFYVQLKDYEKALFFPCKSAELVADY, AMSRYHMAAAYRKLGRMDDAMECCEESMKIALQH, ALCLLCFADIHRHRSDIGKALPRYESSLNIMTEI, and AHVLLNIAKCWMTEKKLDKTLGVVQKAEELADAV. Tyr196 bears the Phosphotyrosine mark. Residues 363 to 403 form an RING-type zinc finger; sequence CGLCGESIGDQNSQLQALPCSHLFHLKCLQTNGNRGCPNCK. Residue Ser405 is modified to Phosphoserine.

This sequence belongs to the RAPsyn family.

Its subcellular location is the cell membrane. It is found in the postsynaptic cell membrane. The protein localises to the cytoplasm. The protein resides in the cytoskeleton. Its function is as follows. Postsynaptic protein required for clustering of nicotinic acetylcholine receptors (nAChRs) at the neuromuscular junction. It may link the receptor to the underlying postsynaptic cytoskeleton, possibly by direct association with actin or spectrin. This is 43 kDa receptor-associated protein of the synapse (RAPSN) from Tetronarce californica (Pacific electric ray).